Here is a 116-residue protein sequence, read N- to C-terminus: Ribosome-binding factor A (116 aa).

The protein belongs to the RbfA family. In terms of assembly, monomer. Binds 30S ribosomal subunits, but not 50S ribosomal subunits or 70S ribosomes.

The protein localises to the cytoplasm. One of several proteins that assist in the late maturation steps of the functional core of the 30S ribosomal subunit. Associates with free 30S ribosomal subunits (but not with 30S subunits that are part of 70S ribosomes or polysomes). Required for efficient processing of 16S rRNA. May interact with the 5'-terminal helix region of 16S rRNA. The sequence is that of Ribosome-binding factor A from Streptococcus pyogenes serotype M3 (strain SSI-1).